The primary structure comprises 656 residues: Protein terminal ear1 (656 aa).

In terms of domain architecture, RRM spans 211-283 (SLVVLSPLPG…RRLVVEFTRP (73 aa)). Disordered stretches follow at residues 280–408 (FTRP…WKGR) and 576–656 (LTDP…GYDD). Basic residues predominate over residues 288 to 299 (PRRRGYAPHQHR). Over residues 314–331 (PSQPTSSQPPASSSSSGS) the composition is skewed to low complexity. A compositionally biased stretch (polar residues) spans 346–358 (CKSSAGSDQSSKG). 3 stretches are compositionally biased toward low complexity: residues 377-397 (AAAAASSSTPTASGKQTQKGV), 585-601 (RSPAASSASSPPKSRAA), and 612-630 (PAPSSSADGASSTTTSTHA). The span at 642-656 (DIRLAGELRRLGYDD) shows a compositional bias: basic and acidic residues.

Expressed below the shoot tip down the flanks of shoot apex in an alternating pattern. Not expressed in root tips, leaves or immature ears (female inflorescences).

Its function is as follows. Probable RNA-binding protein. Involved in the regulation of leaf initiation rate and shoot development. Seems to act more predominantly in the early stages of the leaf development, rather than in the later phase. The chain is Protein terminal ear1 (TE1) from Zea mays (Maize).